The chain runs to 133 residues: Homeobox protein HD-5 (133 aa).

Residues 34–93 (SKRSRLKLSGQQIDVLESNFKIDSHPNSATKSLLSNALSIPLKNIQIWFQNRRAKEKTAR) constitute a DNA-binding region (homeobox). The segment at 86 to 109 (RAKEKTARDGGRRRSGNAEIEDGE) is disordered.

The protein localises to the nucleus. In Encephalitozoon cuniculi (strain GB-M1) (Microsporidian parasite), this protein is Homeobox protein HD-5 (HD-5).